Here is a 207-residue protein sequence, read N- to C-terminus: GTP-binding protein Rheb homolog 1 (207 aa).

Residues G25, K26, S27, Y42, T45, N126, D129, and A157 each contribute to the GTP site. S27 contributes to the Mg(2+) binding site. The Effector region signature appears at 42 to 50 (YESTIEDQH). Residue T45 participates in Mg(2+) binding. Polar residues predominate over residues 180–193 (NLSPTERPNGNSPK). Residues 180–207 (NLSPTERPNGNSPKRNPFKDDGKPCSIS) form a disordered region. Basic and acidic residues predominate over residues 196-207 (PFKDDGKPCSIS). C204 carries the cysteine methyl ester modification. C204 is lipidated: S-farnesyl cysteine. The propeptide at 205 to 207 (SIS) is removed in mature form.

The protein belongs to the small GTPase superfamily. Rheb family.

The protein resides in the cell membrane. The enzyme catalyses GTP + H2O = GDP + phosphate + H(+). Its function is as follows. Binds GTP and exhibits intrinsic GTPase activity. The polypeptide is GTP-binding protein Rheb homolog 1 (rheb-1) (Caenorhabditis elegans).